A 468-amino-acid polypeptide reads, in one-letter code: Glutamine synthetase (468 aa).

Residues 13-97 form the GS beta-grasp domain; sequence NEVKFVDLRF…IRCDILEPAT (85 aa). The region spanning 105-468 is the GS catalytic domain; sequence PRSIAKRAED…PVEFELYYSV (364 aa). 2 residues coordinate Mg(2+): Glu-130 and Glu-132. Glu-208 is an ATP binding site. Residues Glu-213 and Glu-220 each coordinate Mg(2+). L-glutamate-binding positions include 264 to 265 and Gly-265; that span reads NG. His-269 lines the Mg(2+) pocket. ATP contacts are provided by residues 271–273 and Ser-273; that span reads HQS. L-glutamate-binding residues include Arg-321, Glu-327, and Arg-339. ATP contacts are provided by Arg-339, Arg-344, and Lys-352. Glu-357 contacts Mg(2+). Arg-359 provides a ligand contact to L-glutamate. At Tyr-397 the chain carries O-AMP-tyrosine.

Belongs to the glutamine synthetase family. As to quaternary structure, oligomer of 12 subunits arranged in the form of two hexameric ring. The cofactor is Mg(2+).

It is found in the cytoplasm. The catalysed reaction is L-glutamate + NH4(+) + ATP = L-glutamine + ADP + phosphate + H(+). With respect to regulation, the activity of this enzyme could be controlled by adenylation under conditions of abundant glutamine. Its function is as follows. Catalyzes the ATP-dependent biosynthesis of glutamine from glutamate and ammonia. The polypeptide is Glutamine synthetase (Vibrio alginolyticus).